Reading from the N-terminus, the 373-residue chain is Leucoanthocyanidin dioxygenase 2 (373 aa).

The Fe2OG dioxygenase domain occupies 216–315 (LLLQLKINYY…RVSWVVFCEP (100 aa)). His-240, Asp-242, and His-296 together coordinate Fe cation. 2-oxoglutarate is bound at residue Arg-306.

This sequence belongs to the iron/ascorbate-dependent oxidoreductase family. Requires L-ascorbate as cofactor. It depends on Fe(2+) as a cofactor.

It catalyses the reaction a (2R,3S,4S)-leucoanthocyanidin + 2-oxoglutarate + O2 = a 4-H-anthocyanidin with a 3-hydroxy group + succinate + CO2 + 2 H2O. The protein operates within pigment biosynthesis; anthocyanin biosynthesis. Involved in anthocyanin and protoanthocyanidin biosynthesis by catalyzing the oxidation of leucoanthocyanidins into anthocyanidins. The protein is Leucoanthocyanidin dioxygenase 2 of Oryza sativa subsp. japonica (Rice).